Reading from the N-terminus, the 481-residue chain is Multiple inositol polyphosphate phosphatase 1 (481 aa).

An N-terminal signal peptide occupies residues 1 to 30; that stretch reads MLRGARSHLPASVAPAAVLAAALLSSFARC. Histidine 89 is a catalytic residue. N-linked (GlcNAc...) asparagine glycosylation is found at asparagine 236 and asparagine 475. The Prevents secretion from ER motif lies at 478–481; that stretch reads SDEL.

This sequence belongs to the histidine acid phosphatase family. MINPP1 subfamily. N-glycosylated. Widely expressed with highest levels in kidney, intestine, thymus and liver.

It is found in the endoplasmic reticulum lumen. The protein resides in the secreted. The protein localises to the cell membrane. The catalysed reaction is 1D-myo-inositol hexakisphosphate + H2O = 1D-myo-inositol 1,2,4,5,6-pentakisphosphate + phosphate. It carries out the reaction 1D-myo-inositol 1,2,4,5,6-pentakisphosphate + H2O = 1D-myo-inositol 1,2,5,6-tetrakisphosphate + phosphate. The enzyme catalyses 1D-myo-inositol 1,2,5,6-tetrakisphosphate + H2O = 1D-myo-inositol 1,2,6-trisphosphate + phosphate. It catalyses the reaction 1D-myo-inositol 1,2,6-trisphosphate + H2O = 1D-myo-inositol 1,2-bisphosphate + phosphate. The catalysed reaction is 1D-myo-inositol 1,2-bisphosphate + H2O = 1D-myo-inositol 2-phosphate + phosphate. It carries out the reaction 1D-myo-inositol hexakisphosphate + H2O = 1D-myo-inositol 1,2,3,5,6-pentakisphosphate + phosphate. The enzyme catalyses 1D-myo-inositol 1,2,3,5,6-pentakisphosphate + H2O = 1D-myo-inositol 1,2,3,6-tetrakisphosphate + phosphate. It catalyses the reaction 1D-myo-inositol 1,2,3,6-tetrakisphosphate + H2O = 1D-myo-inositol 1,2,3-trisphosphate + phosphate. The catalysed reaction is 1D-myo-inositol 1,2,3-trisphosphate + H2O = 1D-myo-inositol 2,3-bisphosphate + phosphate. It carries out the reaction 1D-myo-inositol 2,3-bisphosphate + H2O = 1D-myo-inositol 2-phosphate + phosphate. The enzyme catalyses 1D-myo-inositol 1,3,4,5,6-pentakisphosphate + H2O = 1D-myo-inositol 1,4,5,6-tetrakisphosphate + phosphate. It catalyses the reaction 1D-myo-inositol 1,4,5,6-tetrakisphosphate + H2O = 1D-myo-inositol 1,4,5-trisphosphate + phosphate. The catalysed reaction is (2R)-2,3-bisphosphoglycerate + H2O = (2R)-2-phosphoglycerate + phosphate. In terms of biological role, multiple inositol polyphosphate phosphatase that hydrolyzes 1D-myo-inositol 1,3,4,5,6-pentakisphosphate (InsP5[2OH]) and 1D-myo-inositol hexakisphosphate (InsP6) to a range of less phosphorylated inositol phosphates. This regulates the availability of these various small molecule second messengers and metal chelators which control many aspects of cell physiology. Has a weak in vitro activity towards 1D-myo-inositol 1,4,5-trisphosphate which is unlikely to be physiologically relevant. By regulating intracellular inositol polyphosphates pools, which act as metal chelators, it may control the availability of intracellular calcium and iron, which are important for proper neuronal development and homeostasis. May have a dual substrate specificity, and function as a 2,3-bisphosphoglycerate 3-phosphatase hydrolyzing 2,3-bisphosphoglycerate to 2-phosphoglycerate. 2,3-bisphosphoglycerate (BPG) is formed as part of the Rapoport-Luebering glycolytic bypass and is a regulator of systemic oxygen homeostasis as the major allosteric effector of hemoglobin. The polypeptide is Multiple inositol polyphosphate phosphatase 1 (Mus musculus (Mouse)).